The following is a 262-amino-acid chain: NAD-dependent glucose-6-phosphate dehydrogenase (262 aa).

Residues Asn90, Ser115, Tyr152, and Lys156 each contribute to the NAD(+) site. Tyr152 serves as the catalytic Proton acceptor.

The protein belongs to the NAD(P)-dependent epimerase/dehydratase family. Homodimer.

The catalysed reaction is D-glucose 6-phosphate + NAD(+) = 6-phospho-D-glucono-1,5-lactone + NADH + H(+). The protein operates within carbohydrate degradation; pentose phosphate pathway. In terms of biological role, catalyzes the NAD-dependent oxidation of glucose 6-phosphate to 6-phosphogluconolactone. The sequence is that of NAD-dependent glucose-6-phosphate dehydrogenase from Haloferax volcanii (strain ATCC 29605 / DSM 3757 / JCM 8879 / NBRC 14742 / NCIMB 2012 / VKM B-1768 / DS2) (Halobacterium volcanii).